A 445-amino-acid polypeptide reads, in one-letter code: Exodeoxyribonuclease 7 large subunit (445 aa).

This sequence belongs to the XseA family. As to quaternary structure, heterooligomer composed of large and small subunits.

The protein localises to the cytoplasm. The catalysed reaction is Exonucleolytic cleavage in either 5'- to 3'- or 3'- to 5'-direction to yield nucleoside 5'-phosphates.. Bidirectionally degrades single-stranded DNA into large acid-insoluble oligonucleotides, which are then degraded further into small acid-soluble oligonucleotides. The polypeptide is Exodeoxyribonuclease 7 large subunit (Staphylococcus epidermidis (strain ATCC 12228 / FDA PCI 1200)).